A 207-amino-acid chain; its full sequence is Holliday junction branch migration complex subunit RuvA (207 aa).

A domain I region spans residues 1-64 (MIGLINGQVQ…EDAQLLYGFI (64 aa)). The tract at residues 65-143 (DRKERDVFRQ…NIEVDSSHLE (79 aa)) is domain II. A flexible linker region spans residues 144–152 (FAMQPAPIS). Residues 153–207 (AEGSIIAEVEGALISLGYKEREAQQAIKAAKSNGETFADTQSLLKATLQQFQSFK) are domain III.

This sequence belongs to the RuvA family. Homotetramer. Forms an RuvA(8)-RuvB(12)-Holliday junction (HJ) complex. HJ DNA is sandwiched between 2 RuvA tetramers; dsDNA enters through RuvA and exits via RuvB. An RuvB hexamer assembles on each DNA strand where it exits the tetramer. Each RuvB hexamer is contacted by two RuvA subunits (via domain III) on 2 adjacent RuvB subunits; this complex drives branch migration. In the full resolvosome a probable DNA-RuvA(4)-RuvB(12)-RuvC(2) complex forms which resolves the HJ.

The protein resides in the cytoplasm. The RuvA-RuvB-RuvC complex processes Holliday junction (HJ) DNA during genetic recombination and DNA repair, while the RuvA-RuvB complex plays an important role in the rescue of blocked DNA replication forks via replication fork reversal (RFR). RuvA specifically binds to HJ cruciform DNA, conferring on it an open structure. The RuvB hexamer acts as an ATP-dependent pump, pulling dsDNA into and through the RuvAB complex. HJ branch migration allows RuvC to scan DNA until it finds its consensus sequence, where it cleaves and resolves the cruciform DNA. This is Holliday junction branch migration complex subunit RuvA from Psychrobacter cryohalolentis (strain ATCC BAA-1226 / DSM 17306 / VKM B-2378 / K5).